Consider the following 159-residue polypeptide: ATP synthase subunit b (159 aa).

Residues 2-22 traverse the membrane as a helical segment; sequence NISIPQIIAAILNFIILLLIV.

It belongs to the ATPase B chain family. In terms of assembly, F-type ATPases have 2 components, F(1) - the catalytic core - and F(0) - the membrane proton channel. F(1) has five subunits: alpha(3), beta(3), gamma(1), delta(1), epsilon(1). F(0) has three main subunits: a(1), b(2) and c(10-14). The alpha and beta chains form an alternating ring which encloses part of the gamma chain. F(1) is attached to F(0) by a central stalk formed by the gamma and epsilon chains, while a peripheral stalk is formed by the delta and b chains.

It localises to the cell membrane. In terms of biological role, f(1)F(0) ATP synthase produces ATP from ADP in the presence of a proton or sodium gradient. F-type ATPases consist of two structural domains, F(1) containing the extramembraneous catalytic core and F(0) containing the membrane proton channel, linked together by a central stalk and a peripheral stalk. During catalysis, ATP synthesis in the catalytic domain of F(1) is coupled via a rotary mechanism of the central stalk subunits to proton translocation. Component of the F(0) channel, it forms part of the peripheral stalk, linking F(1) to F(0). The protein is ATP synthase subunit b of Clostridium botulinum (strain Loch Maree / Type A3).